The primary structure comprises 432 residues: 2-oxoglutarate-dependent dioxygenase AOP2 (432 aa).

Residues 281–378 (SGDDVEANDD…RYTAAIFTCP (98 aa)) form the Fe2OG dioxygenase domain. 3 residues coordinate Fe cation: His-301, Asp-303, and His-358. Arg-369 contacts 2-oxoglutarate.

This sequence belongs to the iron/ascorbate-dependent oxidoreductase family. The cofactor is Fe(2+).

In terms of biological role, 2-oxoglutarate-dependent dioxygenase involved in glucosinolates biosynthesis. Catalyzes the conversion of methylsulfinylalkyl glucosinolates to alkenyl glucosinolates. This is 2-oxoglutarate-dependent dioxygenase AOP2 (AOP2) from Arabidopsis thaliana (Mouse-ear cress).